The chain runs to 171 residues: Xanthine-guanine phosphoribosyltransferase (171 aa).

5-phospho-alpha-D-ribose 1-diphosphate contacts are provided by residues 51–52 (RG) and 106–114 (DDLVDSGKT). Residue aspartate 107 coordinates Mg(2+). 2 residues coordinate guanine: aspartate 110 and isoleucine 153. 2 residues coordinate xanthine: aspartate 110 and isoleucine 153. Residues 110–114 (DSGKT) and 152–153 (WI) each bind GMP.

It belongs to the purine/pyrimidine phosphoribosyltransferase family. XGPT subfamily. Homotetramer. Requires Mg(2+) as cofactor.

The protein resides in the cell inner membrane. It carries out the reaction GMP + diphosphate = guanine + 5-phospho-alpha-D-ribose 1-diphosphate. The catalysed reaction is XMP + diphosphate = xanthine + 5-phospho-alpha-D-ribose 1-diphosphate. The enzyme catalyses IMP + diphosphate = hypoxanthine + 5-phospho-alpha-D-ribose 1-diphosphate. It participates in purine metabolism; GMP biosynthesis via salvage pathway; GMP from guanine: step 1/1. Its pathway is purine metabolism; XMP biosynthesis via salvage pathway; XMP from xanthine: step 1/1. In terms of biological role, purine salvage pathway enzyme that catalyzes the transfer of the ribosyl-5-phosphate group from 5-phospho-alpha-D-ribose 1-diphosphate (PRPP) to the N9 position of the 6-oxopurines guanine and xanthine to form the corresponding ribonucleotides GMP (guanosine 5'-monophosphate) and XMP (xanthosine 5'-monophosphate), with the release of PPi. To a lesser extent, also acts on hypoxanthine. This is Xanthine-guanine phosphoribosyltransferase from Ruegeria pomeroyi (strain ATCC 700808 / DSM 15171 / DSS-3) (Silicibacter pomeroyi).